A 1606-amino-acid polypeptide reads, in one-letter code: Pentafunctional AROM polypeptide (1606 aa).

A 3-dehydroquinate synthase region spans residues 1–390 (MANADVLKVS…YEPKATVVPD (390 aa)). Residues 45-47 (DTN), 85-88 (ETSK), 116-118 (GGV), and aspartate 121 contribute to the NAD(+) site. Arginine 132 lines the 7-phospho-2-dehydro-3-deoxy-D-arabino-heptonate pocket. Residue 141–142 (TT) participates in NAD(+) binding. The 7-phospho-2-dehydro-3-deoxy-D-arabino-heptonate site is built by aspartate 148 and lysine 154. Residue lysine 163 coordinates NAD(+). Asparagine 164 is a 7-phospho-2-dehydro-3-deoxy-D-arabino-heptonate binding site. NAD(+) is bound by residues 181-184 (FLET) and asparagine 192. Glutamate 196 serves as a coordination point for Zn(2+). 7-phospho-2-dehydro-3-deoxy-D-arabino-heptonate-binding positions include 196–199 (EVVK) and lysine 256. Glutamate 266 functions as the Proton acceptor; for 3-dehydroquinate synthase activity in the catalytic mechanism. 7-phospho-2-dehydro-3-deoxy-D-arabino-heptonate-binding positions include 270 to 274 (RNLVN) and histidine 277. Residue histidine 277 coordinates Zn(2+). The active-site Proton acceptor; for 3-dehydroquinate synthase activity is histidine 281. 7-phospho-2-dehydro-3-deoxy-D-arabino-heptonate-binding residues include histidine 293 and lysine 362. Residue histidine 293 participates in Zn(2+) binding. The EPSP synthase stretch occupies residues 403–850 (VIPGVPRHHP…WDDLENKIGL (448 aa)). Residue cysteine 832 is the For EPSP synthase activity of the active site. Residues 875–1070 (AASIILIGMR…TSGRRSYFLC (196 aa)) are shikimate kinase. 882 to 889 (GMRGTGKT) is a binding site for ATP. The segment at 1071-1296 (LTYPDVTQSF…AAPGQLSFKQ (226 aa)) is 3-dehydroquinase. The active-site Proton acceptor; for 3-dehydroquinate dehydratase activity is histidine 1198. Lysine 1226 serves as the catalytic Schiff-base intermediate with substrate; for 3-dehydroquinate dehydratase activity. The tract at residues 1309–1606 (AQRFYLFGTP…QFVFEEECES (298 aa)) is shikimate dehydrogenase.

The protein in the N-terminal section; belongs to the sugar phosphate cyclases superfamily. Dehydroquinate synthase family. This sequence in the 2nd section; belongs to the EPSP synthase family. In the 3rd section; belongs to the shikimate kinase family. It in the 4th section; belongs to the type-I 3-dehydroquinase family. The protein in the C-terminal section; belongs to the shikimate dehydrogenase family. Homodimer. Zn(2+) serves as cofactor.

It localises to the cytoplasm. It carries out the reaction 7-phospho-2-dehydro-3-deoxy-D-arabino-heptonate = 3-dehydroquinate + phosphate. The enzyme catalyses 3-dehydroquinate = 3-dehydroshikimate + H2O. The catalysed reaction is shikimate + NADP(+) = 3-dehydroshikimate + NADPH + H(+). It catalyses the reaction shikimate + ATP = 3-phosphoshikimate + ADP + H(+). It carries out the reaction 3-phosphoshikimate + phosphoenolpyruvate = 5-O-(1-carboxyvinyl)-3-phosphoshikimate + phosphate. It functions in the pathway metabolic intermediate biosynthesis; chorismate biosynthesis; chorismate from D-erythrose 4-phosphate and phosphoenolpyruvate: step 2/7. The protein operates within metabolic intermediate biosynthesis; chorismate biosynthesis; chorismate from D-erythrose 4-phosphate and phosphoenolpyruvate: step 3/7. It participates in metabolic intermediate biosynthesis; chorismate biosynthesis; chorismate from D-erythrose 4-phosphate and phosphoenolpyruvate: step 4/7. Its pathway is metabolic intermediate biosynthesis; chorismate biosynthesis; chorismate from D-erythrose 4-phosphate and phosphoenolpyruvate: step 5/7. It functions in the pathway metabolic intermediate biosynthesis; chorismate biosynthesis; chorismate from D-erythrose 4-phosphate and phosphoenolpyruvate: step 6/7. Its function is as follows. The AROM polypeptide catalyzes 5 consecutive enzymatic reactions in prechorismate polyaromatic amino acid biosynthesis. This chain is Pentafunctional AROM polypeptide, found in Laccaria bicolor (strain S238N-H82 / ATCC MYA-4686) (Bicoloured deceiver).